A 198-amino-acid chain; its full sequence is Formate-dependent nitrite reductase complex subunit NrfG (198 aa).

TPR repeat units follow at residues 73 to 106 and 144 to 177; these read SEQW…RGEN and ITAL…NSPR.

In terms of biological role, required for formate-dependent nitrite reduction. Not required for the biosynthesis of any of the c-type cytochromes nor for the secretion of the periplasmic cytochromes. This Escherichia coli O157:H7 protein is Formate-dependent nitrite reductase complex subunit NrfG (nrfG).